We begin with the raw amino-acid sequence, 69 residues long: Beta-defensin 11 (69 aa).

The signal sequence occupies residues 1-23 (MRTLCSLLLIGCLLFSYDTPVVG). 3 disulfides stabilise this stretch: Cys35–Cys64, Cys42–Cys57, and Cys47–Cys65.

It belongs to the beta-defensin family.

The protein localises to the secreted. Has antibacterial activity. The polypeptide is Beta-defensin 11 (Defb11) (Rattus norvegicus (Rat)).